The following is a 552-amino-acid chain: uncharacterized protein (552 aa).

The DhaL domain occupies K8 to K200.

This is an uncharacterized protein from Staphylococcus saprophyticus subsp. saprophyticus (strain ATCC 15305 / DSM 20229 / NCIMB 8711 / NCTC 7292 / S-41).